The sequence spans 297 residues: Lysenin (297 aa).

An N-terminal cap domain region spans residues 10-33; it reads EQIEVDVVAVWKEGYVYENRGSTS. The segment at 34–107 is beta-hairpin domain; that stretch reads VDQKITITKG…SKVIEHTITI (74 aa). The N-terminal cap domain stretch occupies residues 108–156; the sequence is PPTSKFTRWQLNADVGGADIEYMYLIDEVTPIGGTQSIPQVITSRAKII. Positions 157 to 297 are C-terminal receptor-binding domain; sequence VGRQIILGKT…EDKWILEVVG (141 aa). 4 residues coordinate an N-(acyl)-sphingosylphosphocholine: Lys185, Ser227, Tyr233, and Tyr282. Cysteines 272 and 283 form a disulfide.

It belongs to the lysenin family. In terms of assembly, binds to sphingomyelin as a monomer by using its C-terminal domain. Forms a nonamer when sphingomyelin/lysenin ratio is lower than ca 500. Oligomerization, but not binding, is influenced by the fluidity of sphingomyelin. In terms of tissue distribution, expressed by coelomocytes.

It localises to the secreted. The protein localises to the target cell membrane. Functionally, pore-forming toxin that defensively acts against parasitic microorganisms by forming pores in sphingomyelin-containing membranes. Has hemolytic activity and is also cytotoxic to spermatozoa of some species of invertebrates and many species of vertebrates and to amphibian larvae, guinea pig polymorphonuclear leukocytes, chicken fibroblasts, normal spleen cells and various tumor cells. Is lethal for various species of reptiles, amphibian, birds and mammals. Induces smooth muscle contraction. It binds sphingomyelin and induces hemolysis in the same manner as lysenin-related protein 2, and is 10-fold more effective than lysenin-related protein 1. The protein is Lysenin of Eisenia fetida (Red wiggler worm).